We begin with the raw amino-acid sequence, 156 residues long: Ribosomal RNA large subunit methyltransferase H (156 aa).

S-adenosyl-L-methionine is bound by residues leucine 73, glycine 104, and isoleucine 123–leucine 128.

It belongs to the RNA methyltransferase RlmH family. As to quaternary structure, homodimer.

It is found in the cytoplasm. It carries out the reaction pseudouridine(1915) in 23S rRNA + S-adenosyl-L-methionine = N(3)-methylpseudouridine(1915) in 23S rRNA + S-adenosyl-L-homocysteine + H(+). In terms of biological role, specifically methylates the pseudouridine at position 1915 (m3Psi1915) in 23S rRNA. The protein is Ribosomal RNA large subunit methyltransferase H of Xanthomonas axonopodis pv. citri (strain 306).